The sequence spans 1155 residues: DNA-directed RNA polymerase subunit beta (1155 aa).

This sequence belongs to the RNA polymerase beta chain family. The RNAP catalytic core consists of 2 alpha, 1 beta, 1 beta' and 1 omega subunit. When a sigma factor is associated with the core the holoenzyme is formed, which can initiate transcription.

The enzyme catalyses RNA(n) + a ribonucleoside 5'-triphosphate = RNA(n+1) + diphosphate. Functionally, DNA-dependent RNA polymerase catalyzes the transcription of DNA into RNA using the four ribonucleoside triphosphates as substrates. The sequence is that of DNA-directed RNA polymerase subunit beta from Borrelia duttonii (strain Ly).